Here is a 257-residue protein sequence, read N- to C-terminus: Acetylglutamate kinase (257 aa).

Substrate-binding positions include 43-44, Arg65, and Asn157; that span reads GG. Residues 180–185 and 208–210 contribute to the ATP site; these read DVSGIL and IIT.

It belongs to the acetylglutamate kinase family. ArgB subfamily. Homodimer.

It localises to the cytoplasm. The enzyme catalyses N-acetyl-L-glutamate + ATP = N-acetyl-L-glutamyl 5-phosphate + ADP. The protein operates within amino-acid biosynthesis; L-arginine biosynthesis; N(2)-acetyl-L-ornithine from L-glutamate: step 2/4. Its function is as follows. Catalyzes the ATP-dependent phosphorylation of N-acetyl-L-glutamate. The polypeptide is Acetylglutamate kinase (Edwardsiella ictaluri (strain 93-146)).